The chain runs to 80 residues: Protein P9 (80 aa).

As to quaternary structure, self-associates.

The polypeptide is Protein P9 (Beta vulgaris (Sugar beet)).